A 422-amino-acid polypeptide reads, in one-letter code: G2/mitotic-specific cyclin-A (422 aa).

The tract at residues 1-29 is disordered; sequence MSQPFALHHDGENQMQRRGKMNTRSNGLS.

This sequence belongs to the cyclin family. Cyclin AB subfamily.

In terms of biological role, essential for the control of the cell cycle at the G2/M (mitosis) transition. Interacts with the CDC2 and CDK2 protein kinases to form MPF. G2/M cyclins accumulate steadily during G2 and are abruptly destroyed at mitosis. This is G2/mitotic-specific cyclin-A from Spisula solidissima (Atlantic surf-clam).